A 273-amino-acid polypeptide reads, in one-letter code: MPKNFKKHLPLKKYGQNFLINKDTIKNIIKIIDPKTTETLVEIGPGLAALTKPMCELLEELIVIEIDQDLLFLLKKRSFYSKLIVFYQNALNFNFLNLFHKKKQLIRIFGNLPYNISTSLIIFLFKQIKVIQDMNFMLQKEVAERLISTPGNKSYGRLSIISQYYCDIKILLNVSPEDFRPIPKVHSVFINLKPHTNSPYFVYNVNILSAITKDAFQNRRKILRHSLKNLFSEKELIKLEINSNLRAENVSVSHYCKLANYLYKKSNNLLKIN.

S-adenosyl-L-methionine-binding residues include Asn-17, Leu-19, Gly-44, Glu-65, and Asn-111.

This sequence belongs to the class I-like SAM-binding methyltransferase superfamily. rRNA adenine N(6)-methyltransferase family. RsmA subfamily.

Its subcellular location is the cytoplasm. The catalysed reaction is adenosine(1518)/adenosine(1519) in 16S rRNA + 4 S-adenosyl-L-methionine = N(6)-dimethyladenosine(1518)/N(6)-dimethyladenosine(1519) in 16S rRNA + 4 S-adenosyl-L-homocysteine + 4 H(+). In terms of biological role, specifically dimethylates two adjacent adenosines (A1518 and A1519) in the loop of a conserved hairpin near the 3'-end of 16S rRNA in the 30S particle. May play a critical role in biogenesis of 30S subunits. In Buchnera aphidicola subsp. Acyrthosiphon pisum (strain APS) (Acyrthosiphon pisum symbiotic bacterium), this protein is Ribosomal RNA small subunit methyltransferase A.